The chain runs to 223 residues: Ras-related protein Rab-32 (223 aa).

Ala-2 bears the N-acetylalanine mark. Positions 34, 35, 36, 37, 38, 49, 50, 52, and 55 each coordinate GTP. Thr-37 is a binding site for Mg(2+). The short motif at 46–60 is the Switch 1 element; the sequence is QLFSQHYRATIGVDF. Thr-55 provides a ligand contact to Mg(2+). Ser-69 carries the post-translational modification Phosphoserine. Asp-79 contacts Mg(2+). GTP contacts are provided by Gly-82, Asn-141, Lys-142, Asp-144, Ala-173, and Lys-174. Positions 82 to 95 match the Switch 2 motif; that stretch reads GQERFGNMTRVYYK. A PKA-RII subunit binding domain region spans residues 176-195; the sequence is NINIDEATRFLVENMLANQQ. Residues Cys-222 and Cys-223 are each lipidated (S-geranylgeranyl cysteine).

This sequence belongs to the small GTPase superfamily. Rab family. Interacts with ANKRD27. A decreased interaction with ANKRD27 seen in the presence of SGSM2. Interacts with LRRK2 (via N-terminus); this interaction results in stimulation of RAB10 phosphorylation by LRRK2. It depends on Mg(2+) as a cofactor. In terms of tissue distribution, widely expressed with highest levels in liver. Strong expression also found in melanocyte, platelet, mast cell and fibroblast cell lines.

It is found in the mitochondrion. Its subcellular location is the mitochondrion outer membrane. The protein resides in the cytoplasmic vesicle. The protein localises to the phagosome. It localises to the phagosome membrane. It is found in the melanosome. Its subcellular location is the melanosome membrane. It catalyses the reaction GTP + H2O = GDP + phosphate + H(+). Regulated by guanine the nucleotide exchange factor (GEF) BLOC-3 complex composed of HPS1 and HPS4 which promote the exchange of bound GDP for free GTP. Regulated by the GTPase activating protein (GAP) SGSM2/RUTBC1 which increases the GTP hydrolysis activity. Inhibited by GDP dissociation inhibitors (GDIs) which prevent Rab-GDP dissociation. Its function is as follows. The small GTPases Rab are key regulators of intracellular membrane trafficking, from the formation of transport vesicles to their fusion with membranes. Rabs cycle between an inactive GDP-bound form and an active GTP-bound form that is able to recruit to membranes different set of downstream effectors directly responsible for vesicle formation, movement, tethering and fusion. Also acts as an A-kinase anchoring protein by binding to the type II regulatory subunit of protein kinase A and anchoring it to the mitochondrion. Also involved in synchronization of mitochondrial fission. Plays a role in the maturation of phagosomes that engulf pathogens, such as S.aureus and M.tuberculosis. Plays an important role in the control of melanin production and melanosome biogenesis. In concert with RAB38, regulates the proper trafficking of melanogenic enzymes TYR, TYRP1 and DCT/TYRP2 to melanosomes in melanocytes. Stimulates phosphorylation of RAB10 'Thr-73' by LRRK2. This chain is Ras-related protein Rab-32, found in Mus musculus (Mouse).